A 118-amino-acid polypeptide reads, in one-letter code: Evasin P546 (118 aa).

Residues 1–21 form the signal peptide; the sequence is MKVLLYIAASCLMLLALNVSA. 4 cysteine pairs are disulfide-bonded: Cys-38–Cys-59, Cys-55–Cys-96, Cys-72–Cys-101, and Cys-91–Cys-110. Asn-45 is a glycosylation site (N-linked (GlcNAc...) asparagine).

The protein resides in the secreted. Its function is as follows. Salivary chemokine-binding protein which binds to host chemokines CCL1, CCL3, CCL5 and CCL22. The chain is Evasin P546 from Amblyomma cajennense (Cayenne tick).